Reading from the N-terminus, the 403-residue chain is Chorismate synthase (403 aa).

The NADP(+) site is built by Arg-40 and Arg-46. FMN is bound by residues 140-142 (RSS), 261-262 (QA), Gly-305, 320-324 (KPIST), and Arg-346.

It belongs to the chorismate synthase family. Homotetramer. The cofactor is FMNH2.

The enzyme catalyses 5-O-(1-carboxyvinyl)-3-phosphoshikimate = chorismate + phosphate. It functions in the pathway metabolic intermediate biosynthesis; chorismate biosynthesis; chorismate from D-erythrose 4-phosphate and phosphoenolpyruvate: step 7/7. Its function is as follows. Catalyzes the anti-1,4-elimination of the C-3 phosphate and the C-6 proR hydrogen from 5-enolpyruvylshikimate-3-phosphate (EPSP) to yield chorismate, which is the branch point compound that serves as the starting substrate for the three terminal pathways of aromatic amino acid biosynthesis. This reaction introduces a second double bond into the aromatic ring system. The chain is Chorismate synthase from Corynebacterium diphtheriae (strain ATCC 700971 / NCTC 13129 / Biotype gravis).